Here is a 460-residue protein sequence, read N- to C-terminus: T-box transcription factor TBX1 (460 aa).

Disordered regions lie at residues 30-53 (LNTP…ESQF) and 67-99 (GSNS…TLVK). Residues 67–84 (GSNSAQAPAQGDSGTSNC) are compositionally biased toward polar residues. The segment at residues 116–294 (LWDEFNQLGT…SNPFAKGFRD (179 aa)) is a DNA-binding region (T-box). 2 disordered regions span residues 317–355 (RTRN…DPTH) and 376–400 (PLTA…PDTL). A compositionally biased stretch (polar residues) spans 320–330 (NPMSSPPQQNG). The segment covering 331–344 (TEKEDSRREYDRDP) has biased composition (basic and acidic residues). Positions 418–429 (KTRPSPYPSPSI) match the Nuclear localization signal motif.

Binds DNA as a dimer. Expressed in the ear and mesendodermal components of pharyngeal arches.

The protein localises to the nucleus. Its function is as follows. Probable transcriptional regulator involved in developmental processes. Binds to the palindromic T site 5'-TTCACACCTAGGTGTGAA-3' DNA sequence. Is required for normal development of the pharyngeal arch arteries. Acts cell autonomously in the pharyngeal mesendoderm and influences the development of neural crest-derived cartilages secondarily. This chain is T-box transcription factor TBX1 (tbx1), found in Danio rerio (Zebrafish).